A 128-amino-acid chain; its full sequence is DNA-directed RNA polymerase subunit omega (128 aa).

This sequence belongs to the RNA polymerase subunit omega family. In terms of assembly, the RNAP catalytic core consists of 2 alpha, 1 beta, 1 beta' and 1 omega subunit. When a sigma factor is associated with the core the holoenzyme is formed, which can initiate transcription.

It carries out the reaction RNA(n) + a ribonucleoside 5'-triphosphate = RNA(n+1) + diphosphate. Its function is as follows. Promotes RNA polymerase assembly. Latches the N- and C-terminal regions of the beta' subunit thereby facilitating its interaction with the beta and alpha subunits. The protein is DNA-directed RNA polymerase subunit omega of Neorickettsia sennetsu (strain ATCC VR-367 / Miyayama) (Ehrlichia sennetsu).